Reading from the N-terminus, the 113-residue chain is Putative anti-sigma factor antagonist TM_1081 (113 aa).

An STAS domain is found at 1-110 (MFPYKIVDDV…DTISEAMEEV (110 aa)). S55 is subject to Phosphoserine.

This sequence belongs to the anti-sigma-factor antagonist family. In terms of processing, phosphorylated on a serine residue.

Its function is as follows. In the phosphorylated form it could act as an anti-anti-sigma factor that counteracts an anti-sigma factor and thus releases a sigma factor from inhibition. This is Putative anti-sigma factor antagonist TM_1081 from Thermotoga maritima (strain ATCC 43589 / DSM 3109 / JCM 10099 / NBRC 100826 / MSB8).